The following is a 73-amino-acid chain: Conotoxin Asp7/Gla(3)-TxVI (73 aa).

The first 19 residues, 1–19 (MQKLIILLLVAAVLMSTQA), serve as a signal peptide directing secretion. Positions 20–44 (VLQEKRPKEKIKFLSKRKTDAEKQQ) are excised as a propeptide. 3 disulfides stabilise this stretch: Cys-48-Cys-62, Cys-55-Cys-66, and Cys-61-Cys-71. 4-hydroxyproline is present on residues Pro-49 and Pro-54. A 4-carboxyglutamate modification is found at Glu-60. A 6'-bromotryptophan modification is found at Trp-64.

Expressed by the venom duct.

Its subcellular location is the secreted. In Conus textile (Cloth-of-gold cone), this protein is Conotoxin Asp7/Gla(3)-TxVI.